Consider the following 449-residue polypeptide: Glycine receptor subunit alpha-2 (449 aa).

Positions 1–27 are cleaved as a signal peptide; that stretch reads MTRPSVKLLTTLLACLMEMLNFRVSSG. The Extracellular segment spans residues 28 to 255; the sequence is KDPDLLSSSS…FHLERQMGYY (228 aa). The N-linked (GlcNAc...) asparagine glycan is linked to Asn-70. Residues Arg-97 and Ser-161 each contribute to the glycine site. Residue Arg-97 participates in strychnine binding. The cysteines at positions 170 and 184 are disulfide-linked. Glu-224 and Asp-226 together coordinate Zn(2+). Cys-230 and Cys-241 form a disulfide bridge. Residue Thr-236 coordinates glycine. His-247 is a binding site for Zn(2+). Residues 256–276 traverse the membrane as a helical segment; sequence LIQMYIPSLLIVILSWVSFWI. At 277 to 282 the chain is on the cytoplasmic side; the sequence is NMDAAP. Residues 283-302 form a helical membrane-spanning segment; sequence ARVALGITTVLTMTTQSSGS. Topologically, residues 303–313 are extracellular; sequence RASLPKVSYVK. Residues 314–334 traverse the membrane as a helical segment; the sequence is AIDIWMAVCLLFVFAALLEYA. At 335–420 the chain is on the cytoplasmic side; it reads GVNFVSRQQK…RAKRIDTISR (86 aa). The helical transmembrane segment at 421-441 threads the bilayer; that stretch reads AAFPLAFLIFNVFYWITYKII. Residues 442 to 449 are Extracellular-facing; it reads RHESARKD.

It belongs to the ligand-gated ion channel (TC 1.A.9) family.

It is found in the postsynaptic cell membrane. It localises to the synapse. The protein resides in the cell membrane. Its subcellular location is the cell projection. It catalyses the reaction chloride(in) = chloride(out). With respect to regulation, channel opening is triggered by extracellular glycine. Channel opening is also triggered by taurine and beta-alanine. Inhibited by strychnine. Subunit of heteromeric glycine-gated chloride channels. Plays a role in synaptic plasticity. Contributes to the generation of inhibitory postsynaptic currents, and is involved in the down-regulation of neuronal excitability. The polypeptide is Glycine receptor subunit alpha-2 (glra2) (Danio rerio (Zebrafish)).